The primary structure comprises 642 residues: Threonine--tRNA ligase (642 aa).

Residues 1 to 61 (MPVITLPDGS…ENDATLAIIT (61 aa)) enclose the TGS domain. A catalytic region spans residues 243–534 (DHRKIGKQLD…LTEEFAGFFP (292 aa)). Positions 334, 385, and 511 each coordinate Zn(2+).

It belongs to the class-II aminoacyl-tRNA synthetase family. Homodimer. It depends on Zn(2+) as a cofactor.

It is found in the cytoplasm. It carries out the reaction tRNA(Thr) + L-threonine + ATP = L-threonyl-tRNA(Thr) + AMP + diphosphate + H(+). Functionally, catalyzes the attachment of threonine to tRNA(Thr) in a two-step reaction: L-threonine is first activated by ATP to form Thr-AMP and then transferred to the acceptor end of tRNA(Thr). Also edits incorrectly charged L-seryl-tRNA(Thr). In Salmonella choleraesuis (strain SC-B67), this protein is Threonine--tRNA ligase.